The following is a 264-amino-acid chain: V-type proton ATPase subunit D (264 aa).

A compositionally biased stretch (basic and acidic residues) spans 214 to 230 (RDNAETDAQMKAKKAEQ). The tract at residues 214 to 264 (RDNAETDAQMKAKKAEQQRLALADSENAEGEQTENTPADILAAEEDEDVIF) is disordered. The segment covering 255-264 (AAEEDEDVIF) has biased composition (acidic residues).

Belongs to the V-ATPase D subunit family. As to quaternary structure, V-ATPase is a heteromultimeric enzyme composed of a peripheral catalytic V1 complex (components A to H) attached to an integral membrane V0 proton pore complex (components: a, c, c', c'', d, e, f and VOA1).

Its subcellular location is the vacuole membrane. In terms of biological role, subunit of the V1 complex of vacuolar(H+)-ATPase (V-ATPase), a multisubunit enzyme composed of a peripheral complex (V1) that hydrolyzes ATP and a membrane integral complex (V0) that translocates protons. V-ATPase is responsible for acidifying and maintaining the pH of intracellular compartments. The protein is V-type proton ATPase subunit D (vma-8) of Neurospora crassa (strain ATCC 24698 / 74-OR23-1A / CBS 708.71 / DSM 1257 / FGSC 987).